Here is a 382-residue protein sequence, read N- to C-terminus: Na(+)/H(+) antiporter NhaA (382 aa).

A run of 10 helical transmembrane segments spans residues F11 to A31, F47 to I67, L88 to I108, G116 to F136, F145 to Y165, H170 to L190, I261 to G283, L299 to V319, T327 to V347, and G353 to G373.

This sequence belongs to the NhaA Na(+)/H(+) (TC 2.A.33) antiporter family.

It localises to the cell inner membrane. The enzyme catalyses Na(+)(in) + 2 H(+)(out) = Na(+)(out) + 2 H(+)(in). Its function is as follows. Na(+)/H(+) antiporter that extrudes sodium in exchange for external protons. The chain is Na(+)/H(+) antiporter NhaA from Geobacter sulfurreducens (strain ATCC 51573 / DSM 12127 / PCA).